We begin with the raw amino-acid sequence, 1164 residues long: MDPIRSRTPSPARELLPGPQPDGVQPTADRGVSPPAGGPLDGLPARRTMSRTRLPSPPAPSPAFSAGSFSDLLRQFDPSLFNTSLFDSLPPFGAHHTEAATGEWDEVQSGLRAADAPPPTMRVAVTAARPPRAKPAPRRRAAQPSDASPAAQVDLRTLGYSQQQQEKIKPKVRSTVAQHHEALVGHGFTHAHIVALSQHPAALGTVAVKYQDMIAALPEATHEAIVGVGKQWSGARALEALLTVAGELRGPPLQLDTGQLLKIAKRGGVTAVEAVHAWRNALTGAPLNLTPEQVVAIASHDGGKQALETVQRLLPVLCQAHGLTPQQVVAIASNGGGKQALETVQRLLPVLCQAHGLTPQQVVAIASNSGGKQALETVQRLLPVLCQAHGLTPEQVVAIASNGGGKQALETVQRLLPVLCQAHGLTPEQVVAIASNIGGKQALETVQALLPVLCQAHGLTPEQVVAIASNIGGKQALETVQALLPVLCQAHGLTPEQVVAIASNIGGKQALETVQALLPVLCQAHGLTPEQVVAIASHDGGKQALETVQRLLPVLCQAHGLTPEQVVAIASHDGGKQALETVQRLLPVLCQAHGLTPQQVVAIASNGGGKQALETVQRLLPVLCQAHGLTPEQVVAIASNSGGKQALETVQALLPVLCQAHGLTPEQVVAIASNSGGKQALETVQRLLPVLCQAHGLTPEQVVAIASHDGGKQALETVQRLLPVLCQAHGLTPEQVVAIASHDGGKQALETVQRLLPVLCQAHGLTPEQVVAIASHDGGKQALETVQRLLPVLCQAHGLTPQQVVAIASNGGGRPALETVQRLLPVLCQAHGLTPEQVVAIASHDGGKQALETVQRLLPVLCQAHGLTPQQVVAIASNGGGRPALESIVAQLSRPDPALAALTNDHLVALACLGGRPALDAVKKGLPHAPALIKRTNRRIPERTSHRVADHAQVVRVLGFFQCHSHPAQAFDDAMTQFGMSRHGLLQLFRRVGVTELEARSGTLPPASQRWDRILQASGMKRAKPSPTSTQTPDQASLHAFADSLERDLDAPSPMHEGDQTRASSRKRSRSDRAVTGPSAQQSFEVRVPEQRDALHLPLSWRVKRPRTSIGGGLPDPGTPTAADLAASSTVMREQDEDPFAGAADDFPAFNEEELAWLMELLPQ.

Disordered stretches follow at residues 1 to 68 (MDPI…SAGS) and 128 to 152 (ARPP…PAAQ). The segment covering 131–141 (PRAKPAPRRRA) has biased composition (basic residues). Over residues 142 to 151 (AQPSDASPAA) the composition is skewed to low complexity. One copy of the Cryptic repeat -1 repeat lies at 225-254 (IVGVGKQWSGARALEALLTVAGELRGPPLQ). The Cryptic repeat 0 repeat unit spans residues 255–288 (LDTGQLLKIAKRGGVTAVEAVHAWRNALTGAPLN). 17 Core repeat repeats span residues 289–322 (LTPE…QAHG), 323–356 (LTPQ…QAHG), 357–390 (LTPQ…QAHG), 391–424 (LTPE…QAHG), 425–458 (LTPE…QAHG), 459–492 (LTPE…QAHG), 493–526 (LTPE…QAHG), 527–560 (LTPE…QAHG), 561–594 (LTPE…QAHG), 595–628 (LTPQ…QAHG), 629–662 (LTPE…QAHG), 663–696 (LTPE…QAHG), 697–730 (LTPE…QAHG), 731–764 (LTPE…QAHG), 765–798 (LTPE…QAHG), 799–832 (LTPQ…QAHG), and 833–866 (LTPE…QAHG). One copy of the Core repeat 17.5 repeat lies at 867 to 886 (LTPQQVVAIASNGGGRPALE). Positions 1021-1024 (KRAK) match the Nuclear localization signal NLS1 motif. Residues 1048–1060 (DLDAPSPMHEGDQ) show a composition bias toward basic and acidic residues. The disordered stretch occupies residues 1048–1091 (DLDAPSPMHEGDQTRASSRKRSRSDRAVTGPSAQQSFEVRVPEQ). A Nuclear localization signal NLS2 motif is present at residues 1067–1070 (KRSR). Positions 1104 to 1107 (KRPR) match the Nuclear localization signal NLS3 motif. Residues 1135–1164 (QDEDPFAGAADDFPAFNEEELAWLMELLPQ) form an acidic activation domain AAD region.

Belongs to the transcription activator-like effector (TALE) family. Forms a homodimer in the plant cell cytoplasm, prior to nuclear import. Interacts with the plant cell importin alpha-1 (Caimp alpha-1) and importin alpha-2 (Caimp alpha-2) via the nuclear localization signal NLS2, but not via NLS3.

The protein localises to the secreted. It localises to the host nucleus. In terms of biological role, avirulence protein. Acts as a transcription factor in C.annuum plants. In susceptible plants lacking the Bs3 resistance gene induces expression of a number of genes, including genes homologous to a family of auxin-induced genes, alpha-expansin genes, pectate lyase, anthocyanidin glucoside rhamnosyl transferase and at least one transcription factor, UPA20. Their expression leads to plant hypertrophy in mesophyll cells, probably mainly mediated by UPA20. In resistant plants induces the hypersensitive response (HR), by inducing transcription of plant Bs3 which induces HR; a mutated AvrBs3 missing repeats 11-14 does not induce expression of Bs3 but does induce Bs3-E, a Bs3 allele with a modified promoter. Binds DNA corresponding to the upa-box in sequence-specific manner. This chain is Avirulence protein AvrBs3 (avrBs3), found in Xanthomonas euvesicatoria.